A 567-amino-acid chain; its full sequence is Phenylalanine--tRNA ligase beta subunit (567 aa).

Positions 284–359 (FAVRTKHVSH…RAYDFNDLTP (76 aa)) constitute a B5 domain. Mg(2+) is bound by residues aspartate 337, aspartate 343, aspartate 346, and aspartate 347.

It belongs to the phenylalanyl-tRNA synthetase beta subunit family. Type 2 subfamily. Tetramer of two alpha and two beta subunits. Mg(2+) is required as a cofactor.

It is found in the cytoplasm. The enzyme catalyses tRNA(Phe) + L-phenylalanine + ATP = L-phenylalanyl-tRNA(Phe) + AMP + diphosphate + H(+). The polypeptide is Phenylalanine--tRNA ligase beta subunit (Halobacterium salinarum (strain ATCC 29341 / DSM 671 / R1)).